The primary structure comprises 123 residues: Protein Wnt-7 (123 aa).

Ser1 carries O-palmitoleoyl serine; by PORCN lipidation. A disulfide bridge connects residues Cys89 and Cys104. An N-linked (GlcNAc...) asparagine glycan is attached at Asn90.

This sequence belongs to the Wnt family. Post-translationally, palmitoleoylation is required for efficient binding to frizzled receptors. Depalmitoleoylation leads to Wnt signaling pathway inhibition.

The protein resides in the secreted. It localises to the extracellular space. The protein localises to the extracellular matrix. Ligand for members of the frizzled family of seven transmembrane receptors. Probable developmental protein. May be a signaling molecule which affects the development of discrete regions of tissues. Is likely to signal over only few cell diameters. The protein is Protein Wnt-7 (WNT-7) of Evasterias troschelii (Mottled sea star).